The sequence spans 193 residues: Oocyte-secreted protein 3 (193 aa).

The signal sequence occupies residues 1–22 (MKDFVRLQSSFLLCTILTLSEQ). N-linked (GlcNAc...) asparagine glycans are attached at residues Asn64, Asn130, Asn148, Asn151, Asn165, and Asn178.

This sequence belongs to the PLAC1 family.

The protein localises to the secreted. The chain is Oocyte-secreted protein 3 from Homo sapiens (Human).